The chain runs to 149 residues: Stathmin (149 aa).

The residue at position 2 (A2) is an N-acetylalanine. S4 carries the post-translational modification Phosphoserine. Residues 4–145 (SDIQVKELEK…NKESKDPADE (142 aa)) enclose the SLD domain. The residue at position 9 (K9) is an N6-acetyllysine. S16 carries the post-translational modification Phosphoserine. S25 carries the phosphoserine; by CDK1, MAPK1 and MAPK3 modification. At K29 the chain carries N6-methyllysine. S31 is subject to Phosphoserine. Position 38 is a phosphoserine; by CDK1, MAPK1 and MAPK3 (S38). Positions 41 to 140 (KKKDLSLEEI…EEVRKNKESK (100 aa)) form a coiled coil. Phosphoserine; by PKA is present on S63. N6-acetyllysine is present on residues K100 and K119. Over residues 121 to 143 (ERLREKDKHIEEVRKNKESKDPA) the composition is skewed to basic and acidic residues. Residues 121-149 (ERLREKDKHIEEVRKNKESKDPADETEAD) are disordered.

The protein belongs to the stathmin family. In terms of assembly, binds to two alpha/beta-tubulin heterodimers. Interacts with KIST. Many different phosphorylated forms are observed depending on specific combinations among the sites which can be phosphorylated. MAPK is responsible for the phosphorylation of stathmin in response to NGF. Phosphorylation at Ser-16 seems to be required for neuron polarization.

It localises to the cytoplasm. Its subcellular location is the cytoskeleton. Functionally, involved in the regulation of the microtubule (MT) filament system by destabilizing microtubules. Prevents assembly and promotes disassembly of microtubules. Its phosphorylation at Ser-16 may be required for axon formation during neurogenesis. Involved in the control of the learned and innate fear. The polypeptide is Stathmin (STMN1) (Bos taurus (Bovine)).